A 470-amino-acid polypeptide reads, in one-letter code: Probable tocopherol cyclase, chloroplastic (470 aa).

The N-terminal 61 residues, 1 to 61 (MDLAAAAVAV…APTPRDRALR (61 aa)), are a transit peptide targeting the chloroplast. Positions 14–48 (RPAPPPRRCAPRRHRRALAPRAASSSPSPSTAVAA) are disordered. The segment covering 22–31 (CAPRRHRRAL) has biased composition (basic residues). Residues 32 to 48 (APRAASSSPSPSTAVAA) are compositionally biased toward low complexity.

As to expression, expressed in the roots, stems, leaves and spikelets.

It is found in the plastid. Its subcellular location is the chloroplast. It localises to the plastoglobule. It functions in the pathway cofactor biosynthesis; tocopherol biosynthesis. Its function is as follows. Involved in the synthesis of both tocopherols and tocotrienols (vitamin E), which presumably protect photosynthetic complexes from oxidative stress. Catalyzes the conversion of 2-methyl-6-phytyl-1,4-hydroquinone and 2,3-dimethyl-5-phytyl-1,4-hydroquinone (DMPQ) to delta- and gamma-tocopherol respectively. Also converts 2,3-dimethyl-5-geranylgeranyl-1,4-hydroquinone (DMGQ) to gamma-tocotrienol. This chain is Probable tocopherol cyclase, chloroplastic (VTE1), found in Oryza sativa subsp. japonica (Rice).